We begin with the raw amino-acid sequence, 188 residues long: Elongation factor P (188 aa).

At lysine 34 the chain carries N6-(3,6-diaminohexanoyl)-5-hydroxylysine.

The protein belongs to the elongation factor P family. Post-translationally, may be beta-lysylated on the epsilon-amino group of Lys-34 by the combined action of EpmA and EpmB, and then hydroxylated on the C5 position of the same residue by EpmC (if this protein is present). Lysylation is critical for the stimulatory effect of EF-P on peptide-bond formation. The lysylation moiety may extend toward the peptidyltransferase center and stabilize the terminal 3-CCA end of the tRNA. Hydroxylation of the C5 position on Lys-34 may allow additional potential stabilizing hydrogen-bond interactions with the P-tRNA.

The protein resides in the cytoplasm. The protein operates within protein biosynthesis; polypeptide chain elongation. Functionally, involved in peptide bond synthesis. Alleviates ribosome stalling that occurs when 3 or more consecutive Pro residues or the sequence PPG is present in a protein, possibly by augmenting the peptidyl transferase activity of the ribosome. Modification of Lys-34 is required for alleviation. This Hamiltonella defensa subsp. Acyrthosiphon pisum (strain 5AT) protein is Elongation factor P.